The primary structure comprises 354 residues: Uroporphyrinogen decarboxylase (354 aa).

Residues 27–31 (RQAGR), aspartate 77, tyrosine 154, serine 209, and histidine 327 contribute to the substrate site.

It belongs to the uroporphyrinogen decarboxylase family. As to quaternary structure, homodimer.

It localises to the cytoplasm. It catalyses the reaction uroporphyrinogen III + 4 H(+) = coproporphyrinogen III + 4 CO2. It functions in the pathway porphyrin-containing compound metabolism; protoporphyrin-IX biosynthesis; coproporphyrinogen-III from 5-aminolevulinate: step 4/4. In terms of biological role, catalyzes the decarboxylation of four acetate groups of uroporphyrinogen-III to yield coproporphyrinogen-III. In Teredinibacter turnerae (strain ATCC 39867 / T7901), this protein is Uroporphyrinogen decarboxylase.